Consider the following 1128-residue polypeptide: Glutamate receptor-interacting protein 1 (1128 aa).

Residue Ser43 is modified to Phosphoserine. 6 consecutive PDZ domains span residues 53–136 (VVEL…EYEL), 150–238 (TVEV…EYDV), 252–336 (LVEV…LPHH), 472–561 (EVVL…EFDV), 573–658 (HVKL…RKDE), and 673–755 (TVEL…KKQT). 2 disordered regions span residues 754-798 (QTDA…YPST) and 935-981 (MSLN…GRKS). Residues 944 to 974 (PRSQLGRQASFQERSSSRPHYSQTTRSNTLP) show a composition bias toward polar residues. A PDZ 7 domain is found at 1004 to 1086 (KVTLYKDSDM…KLDLVISRNP (83 aa)). Over residues 1093 to 1115 (IDQQSLPGDWSEQNSAFFQQPSH) the composition is skewed to polar residues. A disordered region spans residues 1093-1128 (IDQQSLPGDWSEQNSAFFQQPSHGGNLETREPTNTL).

Interacts with EPHA7, EPHB2, KIF5A, KIF5B, KIF5C, GRIA2, GRIA3, GRIPAP1/GRASP1, PPFIA1, PPFIA4, FRAS1, PLCD4, PTPRF and liprins-alpha. Can form homomultimers or heteromultimers with GRIP2. Forms a ternary complex with GRIA2 and CSPG4. Interacts with ATAD1 in an ATP-dependent manner. ATAD1-catalyzed ATP hydrolysis disrupts binding to ATAD1 and to GRIA2 and leads to AMPAR complex disassembly. Interacts with EFNB1, EFNB3 and the C-terminal tail of PRLHR. Interacts with SLC30A9. Interacts with BUD23. Forms a complex with NSG1, GRIA2 and STX12; controls the intracellular fate of AMPAR and the endosomal sorting of the GRIA2 subunit toward recycling and membrane targeting. Interacts with NSG1.

It localises to the cytoplasmic vesicle. It is found in the perikaryon. Its subcellular location is the cell projection. The protein localises to the dendrite. The protein resides in the cytoplasm. It localises to the endomembrane system. It is found in the postsynaptic cell membrane. Its subcellular location is the postsynaptic density. The protein localises to the endoplasmic reticulum membrane. In terms of biological role, may play a role as a localized scaffold for the assembly of a multiprotein signaling complex and as mediator of the trafficking of its binding partners at specific subcellular location in neurons. Through complex formation with NSG1, GRIA2 and STX12 controls the intracellular fate of AMPAR and the endosomal sorting of the GRIA2 subunit toward recycling and membrane targeting. This chain is Glutamate receptor-interacting protein 1 (GRIP1), found in Homo sapiens (Human).